The following is a 232-amino-acid chain: Ubiquitin-conjugating enzyme E2-24 kDa (232 aa).

The segment covering 1–37 has biased composition (low complexity); the sequence is MSSTPAAGSAAEVATSSATSNAPSAPSTTASNVSNTS. A disordered region spans residues 1-87; the sequence is MSSTPAAGSA…PRISRALGTS (87 aa). A compositionally biased stretch (gly residues) spans 58–67; sequence GASGSNAGGG. In terms of domain architecture, UBC core spans 86 to 232; that stretch reads TSAKRIQKEL…ARLWTKRYAT (147 aa). Cys-170 (glycyl thioester intermediate) is an active-site residue.

Belongs to the ubiquitin-conjugating enzyme family.

It catalyses the reaction S-ubiquitinyl-[E1 ubiquitin-activating enzyme]-L-cysteine + [E2 ubiquitin-conjugating enzyme]-L-cysteine = [E1 ubiquitin-activating enzyme]-L-cysteine + S-ubiquitinyl-[E2 ubiquitin-conjugating enzyme]-L-cysteine.. It participates in protein modification; protein ubiquitination. Its function is as follows. Catalyzes the covalent attachment of ubiquitin to other proteins. The sequence is that of Ubiquitin-conjugating enzyme E2-24 kDa from Drosophila melanogaster (Fruit fly).